The following is a 444-amino-acid chain: MGKLLQLALHPVEMKAALKLKFCRTPLFSIYDQSTSPYLLHCFELLNLTSRSFAAVIRELHPELRNCVTLFYLILRALDTIEDDMSIEHDLKIDLLRHFHEKLLLTKWSFDGNAPDVKDRAVLTDFESILIEFHKLKPEYQEVIKEITEKMGNGMADYILDENYNLNGLQTVHDYDVYCHYVAGLVGDGLTRLIVIAKFANESLYSNEQLYESMGLFLQKTNIIRDYNEDLVDGRSFWPKEIWSQYAPQLKDFMKPENEQLGLDCINHLVLNALSHVIDVLTYLAGIHEQSTFQFCAIPQVMAIATLALVFNNREVLHGNVKIRKGTTCYLILKSRTLRGCVEIFDYYLRDIKSKLAVQDPNFLKLNIQISKIEQFMEEMYQDKLPPNVKPNETPIFLKVKERSRYDDELVPTQQEEEYKFNMVLSIILSVLLGFYYIYTLHRA.

Residues 421–441 (FNMVLSIILSVLLGFYYIYTL) form a helical membrane-spanning segment.

The protein belongs to the phytoene/squalene synthase family. The cofactor is Mg(2+).

It localises to the endoplasmic reticulum membrane. The protein localises to the microsome. The catalysed reaction is 2 (2E,6E)-farnesyl diphosphate + NADPH + H(+) = squalene + 2 diphosphate + NADP(+). The enzyme catalyses 2 (2E,6E)-farnesyl diphosphate + NADH + H(+) = squalene + 2 diphosphate + NAD(+). It participates in terpene metabolism; lanosterol biosynthesis; lanosterol from farnesyl diphosphate: step 1/3. Its function is as follows. Squalene synthase; part of the third module of ergosterol biosynthesis pathway that includes the late steps of the pathway. ERG9 produces squalene from 2 farnesyl pyrophosphate moieties. The third module or late pathway involves the ergosterol synthesis itself through consecutive reactions that mainly occur in the endoplasmic reticulum (ER) membrane. Firstly, the squalene synthase ERG9 catalyzes the condensation of 2 farnesyl pyrophosphate moieties to form squalene, which is the precursor of all steroids. Squalene synthase is crucial for balancing the incorporation of farnesyl diphosphate (FPP) into sterol and nonsterol isoprene synthesis. Secondly, the squalene epoxidase ERG1 catalyzes the stereospecific oxidation of squalene to (S)-2,3-epoxysqualene, which is considered to be a rate-limiting enzyme in steroid biosynthesis. Then, the lanosterol synthase ERG7 catalyzes the cyclization of (S)-2,3 oxidosqualene to lanosterol, a reaction that forms the sterol core. In the next steps, lanosterol is transformed to zymosterol through a complex process involving various demethylation, reduction and desaturation reactions. The lanosterol 14-alpha-demethylase ERG11 (also known as CYP51) catalyzes C14-demethylation of lanosterol to produce 4,4'-dimethyl cholesta-8,14,24-triene-3-beta-ol, which is critical for ergosterol biosynthesis. The C-14 reductase ERG24 reduces the C14=C15 double bond of 4,4-dimethyl-cholesta-8,14,24-trienol to produce 4,4-dimethyl-cholesta-8,24-dienol. 4,4-dimethyl-cholesta-8,24-dienol is substrate of the C-4 demethylation complex ERG25-ERG26-ERG27 in which ERG25 catalyzes the three-step monooxygenation required for the demethylation of 4,4-dimethyl and 4alpha-methylsterols, ERG26 catalyzes the oxidative decarboxylation that results in a reduction of the 3-beta-hydroxy group at the C-3 carbon to an oxo group, and ERG27 is responsible for the reduction of the keto group on the C-3. ERG28 has a role as a scaffold to help anchor ERG25, ERG26 and ERG27 to the endoplasmic reticulum and ERG29 regulates the activity of the iron-containing C4-methylsterol oxidase ERG25. Then, the sterol 24-C-methyltransferase ERG6 catalyzes the methyl transfer from S-adenosyl-methionine to the C-24 of zymosterol to form fecosterol. The C-8 sterol isomerase ERG2 catalyzes the reaction which results in unsaturation at C-7 in the B ring of sterols and thus converts fecosterol to episterol. The sterol-C5-desaturase ERG3 then catalyzes the introduction of a C-5 double bond in the B ring to produce 5-dehydroepisterol. The C-22 sterol desaturase ERG5 further converts 5-dehydroepisterol into ergosta-5,7,22,24(28)-tetraen-3beta-ol by forming the C-22(23) double bond in the sterol side chain. Finally, ergosta-5,7,22,24(28)-tetraen-3beta-ol is substrate of the C-24(28) sterol reductase ERG4 to produce ergosterol. The chain is Squalene synthase ERG9 from Saccharomyces cerevisiae (strain ATCC 204508 / S288c) (Baker's yeast).